Consider the following 479-residue polypeptide: ATP synthase subunit beta (479 aa).

Residue 168–175 (GGAGVGKT) participates in ATP binding.

It belongs to the ATPase alpha/beta chains family. As to quaternary structure, F-type ATPases have 2 components, CF(1) - the catalytic core - and CF(0) - the membrane proton channel. CF(1) has five subunits: alpha(3), beta(3), gamma(1), delta(1), epsilon(1). CF(0) has three main subunits: a(1), b(2) and c(9-12). The alpha and beta chains form an alternating ring which encloses part of the gamma chain. CF(1) is attached to CF(0) by a central stalk formed by the gamma and epsilon chains, while a peripheral stalk is formed by the delta and b chains.

Its subcellular location is the cell membrane. The catalysed reaction is ATP + H2O + 4 H(+)(in) = ADP + phosphate + 5 H(+)(out). Its function is as follows. Produces ATP from ADP in the presence of a proton gradient across the membrane. The catalytic sites are hosted primarily by the beta subunits. This chain is ATP synthase subunit beta, found in Parafrankia sp. (strain EAN1pec).